The primary structure comprises 637 residues: Biosynthetic arginine decarboxylase (637 aa).

Lys101 carries the N6-(pyridoxal phosphate)lysine modification. Position 286–296 (286–296) interacts with substrate; that stretch reads FDVGGGLAVDY.

It belongs to the Orn/Lys/Arg decarboxylase class-II family. SpeA subfamily. It depends on Mg(2+) as a cofactor. Pyridoxal 5'-phosphate is required as a cofactor.

It carries out the reaction L-arginine + H(+) = agmatine + CO2. The protein operates within amine and polyamine biosynthesis; agmatine biosynthesis; agmatine from L-arginine: step 1/1. Its function is as follows. Catalyzes the biosynthesis of agmatine from arginine. This Shewanella halifaxensis (strain HAW-EB4) protein is Biosynthetic arginine decarboxylase.